We begin with the raw amino-acid sequence, 115 residues long: Parathyroid hormone (115 aa).

An N-terminal signal peptide occupies residues 1–25 (MMSAKDMVKVMIVMLAICFLARSDG). Residues 26–31 (KSVKKR) constitute a propeptide that is removed on maturation. Positions 51–69 (RVEWLRKKLQDVHNFVALG) are important for receptor binding. Residues 77 to 99 (GSSQRPRKKEDNVLVESHQKSLG) are disordered. Residues 84-99 (KKEDNVLVESHQKSLG) are compositionally biased toward basic and acidic residues.

Belongs to the parathyroid hormone family. Interacts with PTH1R (via N-terminal extracellular domain).

The protein localises to the secreted. Functionally, parathyroid hormone elevates calcium level by dissolving the salts in bone and preventing their renal excretion. Acts by binding to its receptor, PTH1R, activating G protein-coupled receptor signaling. Stimulates [1-14C]-2-deoxy-D-glucose (2DG) transport and glycogen synthesis in osteoblastic cells. The polypeptide is Parathyroid hormone (Bos taurus (Bovine)).